The primary structure comprises 355 residues: Uroporphyrinogen decarboxylase (355 aa).

Residues 27–31 (RQAGR), aspartate 77, tyrosine 154, threonine 209, and histidine 327 each bind substrate.

It belongs to the uroporphyrinogen decarboxylase family. In terms of assembly, homodimer.

Its subcellular location is the cytoplasm. It carries out the reaction uroporphyrinogen III + 4 H(+) = coproporphyrinogen III + 4 CO2. It functions in the pathway porphyrin-containing compound metabolism; protoporphyrin-IX biosynthesis; coproporphyrinogen-III from 5-aminolevulinate: step 4/4. Functionally, catalyzes the decarboxylation of four acetate groups of uroporphyrinogen-III to yield coproporphyrinogen-III. This is Uroporphyrinogen decarboxylase from Yersinia pestis bv. Antiqua (strain Antiqua).